A 318-amino-acid chain; its full sequence is Electron transfer flavoprotein subunit alpha (318 aa).

257–285 (LYIALGISGAIQHRAGMQTSKTIVAVNKD) provides a ligand contact to FAD.

The protein belongs to the ETF alpha-subunit/FixB family. In terms of assembly, heterodimer of an alpha and a beta subunit. It depends on FAD as a cofactor.

Functionally, the electron transfer flavoprotein serves as a specific electron acceptor for other dehydrogenases. It transfers the electrons to the main respiratory chain via ETF-ubiquinone oxidoreductase (ETF dehydrogenase). The chain is Electron transfer flavoprotein subunit alpha (etfA) from Mycobacterium tuberculosis (strain CDC 1551 / Oshkosh).